A 428-amino-acid chain; its full sequence is Spliceosome RNA helicase DDX39B (428 aa).

Residues 1-19 (MAENDVDNELLDYEDDEVE) are compositionally biased toward acidic residues. The tract at residues 1-31 (MAENDVDNELLDYEDDEVETAAGGDGAEAPA) is disordered. An N-acetylalanine modification is found at Ala-2. The residue at position 36 (Lys-36) is an N6-acetyllysine; alternate. Lys-36 is covalently cross-linked (Glycyl lysine isopeptide (Lys-Gly) (interchain with G-Cter in SUMO2); alternate). A phosphoserine mark is found at Ser-38 and Ser-41. The Q motif motif lies at 45–73 (SGFRDFLLKPELLRAIVDCGFEHPSEVQH). Residues 76 to 249 (IPQAILGMDV…RKFMQDPMEI (174 aa)) form the Helicase ATP-binding domain. 89 to 96 (AKSGMGKT) provides a ligand contact to ATP. The residue at position 172 (Thr-172) is a Phosphothreonine. Residues 196–199 (DECD) carry the DECD box motif. One can recognise a Helicase C-terminal domain in the interval 261–422 (GLQQYYVKLK…ELPDEIDISS (162 aa)).

This sequence belongs to the DEAD box helicase family. DECD subfamily. Homodimer, and heterodimer with DDX39A. DDX39B interacts with the THO subcomplex to form the THO-DDX39B complex which multimerizes into a 28-subunit tetrameric assembly. Component of the transcription/export (TREX) complex at least composed of ALYREF/THOC4, DDX39B, SARNP/CIP29, CHTOP and the THO subcomplex; in the complex interacts with THOC2. THOC1-THOC2-THOC3-DDX39B subcomplex is sufficient for the interaction with export factor NXF1-NXT1. TREX seems to have a dynamic structure involving ATP-dependent remodeling. Within the TREX complex bridges ALYREF/THOC4 and the THO subcomplex, and, in a ATP-dependent manner, ALYREF/THOC4 and SARNP/CIP29. Component of the spliceosome. Interacts directly with U2AF2. Interacts with RBM8A, RNPS1 and SRRM1, FYTTD1/UIF, THOC1, MX1 and POLDIP3. Interacts with LUZP4. Interacts with SARNP/CIP29 (via the C-terminal domain); the interaction is direct and facilitates RNA binding of DDX39B.

It localises to the nucleus. The protein resides in the nucleus speckle. Its subcellular location is the cytoplasm. It catalyses the reaction ATP + H2O = ADP + phosphate + H(+). Involved in nuclear export of spliced and unspliced mRNA. Component of the TREX complex which is thought to couple mRNA transcription, processing and nuclear export, and specifically associates with spliced mRNA and not with unspliced pre-mRNA. The TREX complex is recruited to spliced mRNAs by a transcription-independent mechanism, binds to mRNA upstream of the exon-junction complex (EJC) and is recruited in a splicing- and cap-dependent manner to a region near the 5' end of the mRNA where it functions in mRNA export to the cytoplasm via the TAP/NXF1 pathway. The THOC1-THOC2-THOC3 core complex alone is sufficient to promote ATPase activity of DDX39B; in the complex THOC2 is the only component that directly interacts with DDX39B. Associates with SARNP/CIP29, which facilitates RNA binding of DDX39B and likely plays a role in mRNA export. May undergo several rounds of ATP hydrolysis during assembly of TREX to drive subsequent loading of components such as ALYREF/THOC4 and CHTOP onto mRNA. Also associates with pre-mRNA independent of ALYREF/THOC4. Involved in the nuclear export of intronless mRNA; the ATP-bound form is proposed to recruit export adapter ALYREF/THOC4 to intronless mRNA; its ATPase activity is cooperatively stimulated by RNA and ALYREF/THOC4 and ATP hydrolysis is thought to trigger the dissociation from RNA to allow the association of ALYREF/THOC4 and the NXF1-NXT1 heterodimer. Involved in transcription elongation and genome stability. Functionally, splice factor that is required for the first ATP-dependent step in spliceosome assembly and for the interaction of U2 snRNP with the branchpoint. Has both RNA-stimulated ATP binding/hydrolysis activity and ATP-dependent RNA unwinding activity. Even with the stimulation of RNA, the ATPase activity is weak. Can only hydrolyze ATP but not other NTPs. The RNA stimulation of ATPase activity does not have a strong preference for the sequence and length of the RNA. However, ssRNA stimulates the ATPase activity much more strongly than dsRNA. Can unwind 5' or 3' overhangs or blunt end RNA duplexes in vitro. The ATPase and helicase activities are not influenced by U2AF2; the effect of ALYREF/THOC4 is reported conflictingly. This is Spliceosome RNA helicase DDX39B (DDX39B) from Bos taurus (Bovine).